The following is a 207-amino-acid chain: dITP/XTP pyrophosphatase (207 aa).

10–15 contacts substrate; it reads TRNAGK. Residues Glu-43 and Asp-72 each contribute to the Mg(2+) site. Asp-72 acts as the Proton acceptor in catalysis. Substrate is bound by residues Ser-73, 161–164, Lys-184, and 189–190; these read FGYD and HR.

The protein belongs to the HAM1 NTPase family. As to quaternary structure, homodimer. Requires Mg(2+) as cofactor.

The enzyme catalyses XTP + H2O = XMP + diphosphate + H(+). The catalysed reaction is dITP + H2O = dIMP + diphosphate + H(+). It carries out the reaction ITP + H2O = IMP + diphosphate + H(+). In terms of biological role, pyrophosphatase that catalyzes the hydrolysis of nucleoside triphosphates to their monophosphate derivatives, with a high preference for the non-canonical purine nucleotides XTP (xanthosine triphosphate), dITP (deoxyinosine triphosphate) and ITP. Seems to function as a house-cleaning enzyme that removes non-canonical purine nucleotides from the nucleotide pool, thus preventing their incorporation into DNA/RNA and avoiding chromosomal lesions. In Nitratidesulfovibrio vulgaris (strain ATCC 29579 / DSM 644 / CCUG 34227 / NCIMB 8303 / VKM B-1760 / Hildenborough) (Desulfovibrio vulgaris), this protein is dITP/XTP pyrophosphatase.